A 413-amino-acid polypeptide reads, in one-letter code: Serine hydroxymethyltransferase (413 aa).

(6S)-5,6,7,8-tetrahydrofolate is bound by residues L119 and 123-125; that span reads GHL. K228 is modified (N6-(pyridoxal phosphate)lysine). (6S)-5,6,7,8-tetrahydrofolate is bound at residue 351-353; that stretch reads SPF.

It belongs to the SHMT family. As to quaternary structure, homodimer. Pyridoxal 5'-phosphate is required as a cofactor.

The protein localises to the cytoplasm. It carries out the reaction (6R)-5,10-methylene-5,6,7,8-tetrahydrofolate + glycine + H2O = (6S)-5,6,7,8-tetrahydrofolate + L-serine. Its pathway is one-carbon metabolism; tetrahydrofolate interconversion. It functions in the pathway amino-acid biosynthesis; glycine biosynthesis; glycine from L-serine: step 1/1. In terms of biological role, catalyzes the reversible interconversion of serine and glycine with tetrahydrofolate (THF) serving as the one-carbon carrier. This reaction serves as the major source of one-carbon groups required for the biosynthesis of purines, thymidylate, methionine, and other important biomolecules. Also exhibits THF-independent aldolase activity toward beta-hydroxyamino acids, producing glycine and aldehydes, via a retro-aldol mechanism. This chain is Serine hydroxymethyltransferase, found in Anoxybacillus flavithermus (strain DSM 21510 / WK1).